The chain runs to 533 residues: MLAFPYLMTMITPPTFDVAFIGSGAACSMTLLEMADALLSSPSASPKLRIAVVERDEQFWCGIPYGQRSSIGSLAIQKLDDFADEPEKAAYRIWLEQNKQRWLAFFQAEGGAAAARWICDNRDALDGNQWGELYLPRFLFGVFLSEQMIAAIAALGERDLAEIVTIRAEAMSAHSADGHYRIGLRPSGNGPTAIAAGKVVVAIGSPPTKAILASDSEPAFTYINDFYSPGGESNVARLRDSLDRVESWEKRNVLVVGSNATSLEALYLMRHDARIRARVRSITVISRSGVLPYMICNQPPEFDFPRLRTLLCTEAIAAADLMSAIRDDLATAEERSLNLADLYDAVAALFGQALHKMDLVQQEEFFCVHGMNFTKLVRRAGRDCRQASEELAADGTLSLLAGEVLRVDACASGQPFATMTYRAAGAEHTHPVPFAAVVNCGGFEELDTCSSPFLVSAMQNGLCRPNRTNRGLLVNDDFEASPGFCVIGPLVGGNFTPKIRFWHVESAPRVRSLAKSLAASLLASLQPVALAPC.

The next 4 membrane-spanning stretches (helical) occupy residues Met1–Ile21, Leu135–Leu155, Ala193–Ala213, and Leu472–Gly492.

The protein localises to the cell membrane. This is an uncharacterized protein from Mycobacterium bovis (strain ATCC BAA-935 / AF2122/97).